The sequence spans 89 residues: Elongation factor 1-beta (89 aa).

This sequence belongs to the EF-1-beta/EF-1-delta family.

Its function is as follows. Promotes the exchange of GDP for GTP in EF-1-alpha/GDP, thus allowing the regeneration of EF-1-alpha/GTP that could then be used to form the ternary complex EF-1-alpha/GTP/AAtRNA. This is Elongation factor 1-beta from Methanobrevibacter smithii (strain ATCC 35061 / DSM 861 / OCM 144 / PS).